The sequence spans 33 residues: Cytochrome b6-f complex subunit 6 (33 aa).

The chain crosses the membrane as a helical span at residues 4–24 (ITIISYFGFLLASIIFTLVLF).

This sequence belongs to the PetL family. The 4 large subunits of the cytochrome b6-f complex are cytochrome b6, subunit IV (17 kDa polypeptide, PetD), cytochrome f and the Rieske protein, while the 4 small subunits are PetG, PetL, PetM and PetN. The complex functions as a dimer.

It localises to the plastid. It is found in the chloroplast thylakoid membrane. Its function is as follows. Component of the cytochrome b6-f complex, which mediates electron transfer between photosystem II (PSII) and photosystem I (PSI), cyclic electron flow around PSI, and state transitions. PetL is important for photoautotrophic growth as well as for electron transfer efficiency and stability of the cytochrome b6-f complex. The protein is Cytochrome b6-f complex subunit 6 of Pinus thunbergii (Japanese black pine).